Here is a 666-residue protein sequence, read N- to C-terminus: DNA mismatch repair protein MutL (666 aa).

Belongs to the DNA mismatch repair MutL/HexB family.

Functionally, this protein is involved in the repair of mismatches in DNA. It is required for dam-dependent methyl-directed DNA mismatch repair. May act as a 'molecular matchmaker', a protein that promotes the formation of a stable complex between two or more DNA-binding proteins in an ATP-dependent manner without itself being part of a final effector complex. The chain is DNA mismatch repair protein MutL from Clostridium botulinum (strain Langeland / NCTC 10281 / Type F).